The primary structure comprises 354 residues: Glycerol-3-phosphate dehydrogenase [NAD(+)], glycosomal (354 aa).

NAD(+) contacts are provided by residues 15–20 (GSGAFG), Phe-90, Lys-118, and Ala-150. Lys-118 lines the substrate pocket. Lys-203 (proton acceptor) is an active-site residue. The NAD(+) site is built by Arg-267 and Glu-293. 267–268 (RN) contributes to the substrate binding site. Positions 352-354 (SKM) match the Microbody targeting signal motif.

It belongs to the NAD-dependent glycerol-3-phosphate dehydrogenase family.

It localises to the glycosome. The enzyme catalyses sn-glycerol 3-phosphate + NAD(+) = dihydroxyacetone phosphate + NADH + H(+). In Trypanosoma brucei rhodesiense, this protein is Glycerol-3-phosphate dehydrogenase [NAD(+)], glycosomal (GPD).